The sequence spans 40 residues: MITDMQLAIFSNVLGVFLFLLVVAYHYINANTGKPSAKAK.

The Lumenal portion of the chain corresponds to methionine 1–leucine 7. The chain crosses the membrane as a helical span at residues alanine 8–isoleucine 28. Residues asparagine 29–lysine 40 lie on the Cytoplasmic side of the membrane.

This sequence belongs to the OST4 family. Component of the oligosaccharyltransferase (OST) complex.

The protein resides in the endoplasmic reticulum membrane. Its function is as follows. Subunit of the oligosaccharyl transferase (OST) complex that catalyzes the initial transfer of a defined glycan (Glc(3)Man(9)GlcNAc(2) in eukaryotes) from the lipid carrier dolichol-pyrophosphate to an asparagine residue within an Asn-X-Ser/Thr consensus motif in nascent polypeptide chains, the first step in protein N-glycosylation. N-glycosylation occurs cotranslationally and the complex associates with the Sec61 complex at the channel-forming translocon complex that mediates protein translocation across the endoplasmic reticulum (ER). All subunits are required for a maximal enzyme activity. The polypeptide is Dolichyl-diphosphooligosaccharide--protein glycosyltransferase subunit 4 (Drosophila sechellia (Fruit fly)).